Consider the following 412-residue polypeptide: Serine hydroxymethyltransferase (412 aa).

(6S)-5,6,7,8-tetrahydrofolate is bound by residues L117 and 121–123; that span reads GHL. An N6-(pyridoxal phosphate)lysine modification is found at K226. (6S)-5,6,7,8-tetrahydrofolate is bound at residue 349 to 351; sequence SPF.

Belongs to the SHMT family. As to quaternary structure, homodimer. The cofactor is pyridoxal 5'-phosphate.

Its subcellular location is the cytoplasm. The catalysed reaction is (6R)-5,10-methylene-5,6,7,8-tetrahydrofolate + glycine + H2O = (6S)-5,6,7,8-tetrahydrofolate + L-serine. It participates in one-carbon metabolism; tetrahydrofolate interconversion. It functions in the pathway amino-acid biosynthesis; glycine biosynthesis; glycine from L-serine: step 1/1. Catalyzes the reversible interconversion of serine and glycine with tetrahydrofolate (THF) serving as the one-carbon carrier. This reaction serves as the major source of one-carbon groups required for the biosynthesis of purines, thymidylate, methionine, and other important biomolecules. Also exhibits THF-independent aldolase activity toward beta-hydroxyamino acids, producing glycine and aldehydes, via a retro-aldol mechanism. This chain is Serine hydroxymethyltransferase, found in Halothermothrix orenii (strain H 168 / OCM 544 / DSM 9562).